The following is a 347-amino-acid chain: Ataxin-7-like protein 3 (347 aa).

Residues 84 to 105 (CVCPNCSRSIAASRFAPHLEKC) form an SGF11-type zinc finger. The segment covering 116 to 125 (ANRRIANSNN) has biased composition (low complexity). The segment at 116 to 184 (ANRRIANSNN…GELSNSDPFK (69 aa)) is disordered. Phosphoserine occurs at positions 129 and 131. The span at 132–141 (DQEDNDDIND) shows a compositional bias: acidic residues. The region spanning 196–263 (LGPEELRSLL…SLDNDSFDMT (68 aa)) is the SCA7 domain. The span at 275-288 (DGSSDLSPSDSGSS) shows a compositional bias: low complexity. Residues 275–347 (DGSSDLSPSD…PTPSIYDDIN (73 aa)) form a disordered region. Phosphoserine occurs at positions 278, 281, and 326.

It belongs to the SGF11 family. Component of some SAGA transcription coactivator-HAT complexes, at least composed of ATXN7, ATXN7L3, ENY2, GCN5L2, SUPT3H, TAF10, TRRAP and USP22. Within the SAGA complex, ENY2, ATXN7, ATXN7L3, and USP22 form an additional subcomplex of SAGA called the DUB module (deubiquitination module). Interacts directly with ENY2 and USP22.

The protein localises to the nucleus. In terms of biological role, component of the transcription regulatory histone acetylation (HAT) complex SAGA, a multiprotein complex that activates transcription by remodeling chromatin and mediating histone acetylation and deubiquitination. Within the SAGA complex, participates in a subcomplex that specifically deubiquitinates both histones H2A and H2B. The SAGA complex is recruited to specific gene promoters by activators such as MYC, where it is required for transcription. Required for nuclear receptor-mediated transactivation. Within the complex, it is required to recruit USP22 and ENY2 into the SAGA complex. Regulates H2B monoubiquitination (H2Bub1) levels. Affects subcellular distribution of ENY2, USP22 and ATXN7L3B. The polypeptide is Ataxin-7-like protein 3 (Homo sapiens (Human)).